Reading from the N-terminus, the 250-residue chain is 2,3-bisphosphoglycerate-dependent phosphoglycerate mutase (250 aa).

Residues Arg-10, His-11, Asn-17, Gly-24, Arg-62, Glu-89, Tyr-92, Lys-100, Arg-116, Arg-117, His-184, Gly-185, and Asn-186 each coordinate (2R)-2,3-bisphosphoglycerate. Residue His-11 is the Tele-phosphohistidine intermediate of the active site. Residue Gly-24 participates in (2R)-3-phosphoglycerate binding. (2R)-3-phosphoglycerate-binding residues include Glu-89, Tyr-92, Lys-100, Arg-116, and Arg-117. The active-site Proton donor/acceptor is the Glu-89. Asn-186 serves as a coordination point for (2R)-3-phosphoglycerate.

It belongs to the phosphoglycerate mutase family. BPG-dependent PGAM subfamily. In terms of tissue distribution, ubiquitously expressed with the highest expression in the sub-tegumental muscle layer (at protein level). Expressed in the tegument (at protein level).

The protein resides in the tegument. It carries out the reaction (2R)-2-phosphoglycerate = (2R)-3-phosphoglycerate. Its pathway is carbohydrate degradation; glycolysis; pyruvate from D-glyceraldehyde 3-phosphate: step 3/5. Its activity is regulated as follows. Strongly activated by 2,3-bisphosphoglycerate (2,3-BPG). Inhibited by vanadate in a dose-dependent manner. Functionally, catalyzes interconversion of 3- and 2-phosphoglycerate with 2,3-bisphosphoglycerate (2,3-BPG) as the primer of the reaction. Schistosomula have significant surface phosphoglycerate mutase activity also without 2,3-BPG. Binds human plasminogen and enhances its conversion to active thrombolytic plasmin in the presence of human tissue plasminogen activator (tPA) in vitro. Host-interactive surface protein, which may degrade vascular blood clots surrounding the worm in vivo and thus may help survival of the parasite in its host microenvironment. The protein is 2,3-bisphosphoglycerate-dependent phosphoglycerate mutase of Schistosoma mansoni (Blood fluke).